The following is a 427-amino-acid chain: Tyrosine--tRNA ligase (427 aa).

Tyr39 is an L-tyrosine binding site. The 'HIGH' region motif lies at 44–53 (PTSDSLHIGH). 2 residues coordinate L-tyrosine: Tyr178 and Gln182. The 'KMSKS' region motif lies at 238-242 (KFGKT). Lys241 is an ATP binding site. In terms of domain architecture, S4 RNA-binding spans 360–417 (ITLQQALVESKLVVSRAQARELISSNSITVNSKKQLKTEYIFCATDRLYNRFTLLRRG).

It belongs to the class-I aminoacyl-tRNA synthetase family. TyrS type 1 subfamily. In terms of assembly, homodimer.

Its subcellular location is the cytoplasm. It catalyses the reaction tRNA(Tyr) + L-tyrosine + ATP = L-tyrosyl-tRNA(Tyr) + AMP + diphosphate + H(+). In terms of biological role, catalyzes the attachment of tyrosine to tRNA(Tyr) in a two-step reaction: tyrosine is first activated by ATP to form Tyr-AMP and then transferred to the acceptor end of tRNA(Tyr). This Blochmanniella pennsylvanica (strain BPEN) protein is Tyrosine--tRNA ligase.